The sequence spans 205 residues: Small ribosomal subunit protein uS4 (205 aa).

The S4 RNA-binding domain maps to 93–171 (SRVSSVLYRS…SPHYLEVDRE (79 aa)).

The protein belongs to the universal ribosomal protein uS4 family. As to quaternary structure, part of the 30S ribosomal subunit. Contacts protein S5. The interaction surface between S4 and S5 is involved in control of translational fidelity.

Functionally, one of the primary rRNA binding proteins, it binds directly to 16S rRNA where it nucleates assembly of the body of the 30S subunit. In terms of biological role, with S5 and S12 plays an important role in translational accuracy. This is Small ribosomal subunit protein uS4 from Neorickettsia sennetsu (strain ATCC VR-367 / Miyayama) (Ehrlichia sennetsu).